We begin with the raw amino-acid sequence, 452 residues long: Tubulin beta-2 chain (452 aa).

8 residues coordinate GTP: Gln-11, Glu-74, Ser-143, Val-147, Thr-148, Gly-149, Asn-209, and Asn-231. A Mg(2+)-binding site is contributed by Glu-74. The segment at 431–452 (QEATADDEAEFEEEGEVEGEYD) is disordered. Over residues 434-452 (TADDEAEFEEEGEVEGEYD) the composition is skewed to acidic residues.

Belongs to the tubulin family. Dimer of alpha and beta chains. A typical microtubule is a hollow water-filled tube with an outer diameter of 25 nm and an inner diameter of 15 nM. Alpha-beta heterodimers associate head-to-tail to form protofilaments running lengthwise along the microtubule wall with the beta-tubulin subunit facing the microtubule plus end conferring a structural polarity. Microtubules usually have 13 protofilaments but different protofilament numbers can be found in some organisms and specialized cells. The cofactor is Mg(2+).

It is found in the cytoplasm. Its subcellular location is the cytoskeleton. In terms of biological role, tubulin is the major constituent of microtubules, a cylinder consisting of laterally associated linear protofilaments composed of alpha- and beta-tubulin heterodimers. Microtubules grow by the addition of GTP-tubulin dimers to the microtubule end, where a stabilizing cap forms. Below the cap, tubulin dimers are in GDP-bound state, owing to GTPase activity of alpha-tubulin. This is Tubulin beta-2 chain from Homarus americanus (American lobster).